The primary structure comprises 215 residues: Tricarboxylate transporter ALT9 (215 aa).

2 Solcar repeats span residues 18-106 and 111-197; these read TTVV…LAPM and CGVS…VVRL. Transmembrane regions (helical) follow at residues 19 to 39, 112 to 132, and 182 to 202; these read TVVGNMVAGMCAGVAESVLVL, GVSTSVVAGALAGVITVYCTM, and VAGAIAFTLYEEVVRLTGFLV.

This sequence belongs to the mitochondrial carrier (TC 2.A.29) family.

It localises to the mitochondrion inner membrane. Its pathway is mycotoxin biosynthesis. Tricarboxylate transporter; part of the gene cluster that mediates the biosynthesis of the host-selective toxins (HSTs) AAL-toxins, sphinganine-analog mycotoxins responsible for Alternaria stem canker on tomato by the tomato pathotype. The biosynthesis starts with the polyketide synthase ALT1-catalyzed C-16 carbon chain assembly from one starter acetyl-CoA unit with malonyl-CoA extender units. ALT1 also selectively transfers methyl groups at the first and the third cycle of chain elongation for AAL toxin. The C-16 polyketide chain is released from the enzyme by a nucleophilic attack of a carbanion, which is derived from R-carbon of glycin by decarboxylation, on the carbonyl carbon of polyketide acyl chain. This step is probably catalyzed by a pyridoxal 5'-phosphate-dependent aminoacyl transferase ALT4. The respective functions of the other enzymes encoded by the cluster have still to be elucidated. The sphingosine N-acyltransferase-like protein ALT7 seems not to act as a resistance/self-tolerance factor against the toxin in the toxin biosynthetic gene cluster, contrary to what is expected. In Alternaria alternata (Alternaria rot fungus), this protein is Tricarboxylate transporter ALT9.